We begin with the raw amino-acid sequence, 506 residues long: Maturase K (506 aa).

It belongs to the intron maturase 2 family. MatK subfamily.

The protein resides in the plastid. It is found in the chloroplast. Usually encoded in the trnK tRNA gene intron. Probably assists in splicing its own and other chloroplast group II introns. In Manihot esculenta (Cassava), this protein is Maturase K.